The primary structure comprises 342 residues: Serpentine receptor class gamma-69 (342 aa).

7 consecutive transmembrane segments (helical) span residues 11-31 (MAGL…SVVV), 51-71 (SLLY…HFLI), 106-126 (PIAI…IVAA), 140-160 (LFVL…IPCK), 191-211 (IAAV…LIAL), 222-242 (AEIS…IYAF), and 269-289 (FAID…STTV).

This sequence belongs to the nematode receptor-like protein srg family.

Its subcellular location is the membrane. The chain is Serpentine receptor class gamma-69 (srg-69) from Caenorhabditis elegans.